The primary structure comprises 330 residues: FKBP12-interacting protein of 37 kDa (330 aa).

The residue at position 1 (M1) is an N-acetylmethionine. The span at 1 to 12 shows a compositional bias: acidic residues; sequence MEFSSQDDDFGG. Residues 1–43 form a disordered region; it reads MEFSSQDDDFGGDDSAANATRASGNRRSFGDLEDDEDDIFGST. A compositionally biased stretch (polar residues) spans 17–26; the sequence is ANATRASGNR. Residues 56–308 are a coiled coil; sequence SLRGSLKNCK…KGLEIVSELV (253 aa).

Belongs to the fl(2)d family. Forms homodimers. Interacts with MTA/EMB1706. Interacts with FKBP12; interaction is inhibited by the immunosuppressive drug FK506. Interacts with VIR. Associates with MTA, MTB, VIR and HAKAI to form the m6A writer complex which is essential for adenosine methylation at specific mRNA sequences. As to expression, ubiquitously expressed with higher levels in primary and lateral roots, leaves, trichomes, and in pollen grains (at protein level).

The protein resides in the nucleus speckle. Its subcellular location is the nucleus. It is found in the nucleoplasm. In terms of biological role, probable regulatory subunit of the N6-methyltransferase complex, a multiprotein complex that mediates N6-methyladenosine (m6A) methylation at the 5'-[AG]GAC-3' consensus sites of some mRNAs. Associates with MTA, MTB, VIR and HAKAI to form the m6A writer complex which is essential for adenosine methylation at specific mRNA sequences. N6-methyladenosine (m6A) plays a role in mRNA stability, processing, translation efficiency and editing. Essential protein required during endosperm development and embryogenesis. Involved in endoreduplication, especially in trichomes. May play a role in splicing events. The chain is FKBP12-interacting protein of 37 kDa from Arabidopsis thaliana (Mouse-ear cress).